The following is a 278-amino-acid chain: Phosphatidylglycerol--prolipoprotein diacylglyceryl transferase (278 aa).

4 helical membrane-spanning segments follow: residues 19 to 39 (WYGILMATGVLVATLMAINEG), 49 to 69 (FIDFLLWAVPIGFIGARIYYV), 86 to 106 (IWNGGIAIYGGLIAGLIVLLI), and 112 to 132 (MLPPFLMLDIIAPGVMAAQVI). Arg-134 lines the a 1,2-diacyl-sn-glycero-3-phospho-(1'-sn-glycerol) pocket. 3 helical membrane passes run 174–194 (QPTYLYESTLNLIGLILILSL), 204–224 (GEIFLSYVIWYSAVRFFVEGM), and 235–255 (IRVSQALSLILFFGAIILWIY).

This sequence belongs to the Lgt family.

The protein localises to the cell membrane. The catalysed reaction is L-cysteinyl-[prolipoprotein] + a 1,2-diacyl-sn-glycero-3-phospho-(1'-sn-glycerol) = an S-1,2-diacyl-sn-glyceryl-L-cysteinyl-[prolipoprotein] + sn-glycerol 1-phosphate + H(+). Its pathway is protein modification; lipoprotein biosynthesis (diacylglyceryl transfer). Catalyzes the transfer of the diacylglyceryl group from phosphatidylglycerol to the sulfhydryl group of the N-terminal cysteine of a prolipoprotein, the first step in the formation of mature lipoproteins. This is Phosphatidylglycerol--prolipoprotein diacylglyceryl transferase from Lactobacillus johnsonii (strain CNCM I-12250 / La1 / NCC 533).